The chain runs to 242 residues: tRNA pseudouridine synthase A (242 aa).

The active-site Nucleophile is Asp-51. Position 107 (Tyr-107) interacts with substrate.

The protein belongs to the tRNA pseudouridine synthase TruA family. In terms of assembly, homodimer.

The enzyme catalyses uridine(38/39/40) in tRNA = pseudouridine(38/39/40) in tRNA. Its function is as follows. Formation of pseudouridine at positions 38, 39 and 40 in the anticodon stem and loop of transfer RNAs. The polypeptide is tRNA pseudouridine synthase A (Helicobacter pylori (strain Shi470)).